An 81-amino-acid chain; its full sequence is Neuronatin (81 aa).

This sequence belongs to the neuronatin family.

In terms of biological role, may participate in the maintenance of segment identity in the hindbrain and pituitary development, and maturation or maintenance of the overall structure of the nervous system. May function as a regulatory subunit of ion channels. The polypeptide is Neuronatin (NNAT) (Homo sapiens (Human)).